A 186-amino-acid polypeptide reads, in one-letter code: Elongation factor P (186 aa).

It belongs to the elongation factor P family.

The protein localises to the cytoplasm. The protein operates within protein biosynthesis; polypeptide chain elongation. Involved in peptide bond synthesis. Stimulates efficient translation and peptide-bond synthesis on native or reconstituted 70S ribosomes in vitro. Probably functions indirectly by altering the affinity of the ribosome for aminoacyl-tRNA, thus increasing their reactivity as acceptors for peptidyl transferase. In Cupriavidus necator (strain ATCC 17699 / DSM 428 / KCTC 22496 / NCIMB 10442 / H16 / Stanier 337) (Ralstonia eutropha), this protein is Elongation factor P.